Consider the following 311-residue polypeptide: Porphobilinogen deaminase (311 aa).

Residue cysteine 243 is modified to S-(dipyrrolylmethanemethyl)cysteine.

It belongs to the HMBS family. As to quaternary structure, monomer. Requires dipyrromethane as cofactor.

It catalyses the reaction 4 porphobilinogen + H2O = hydroxymethylbilane + 4 NH4(+). It participates in porphyrin-containing compound metabolism; protoporphyrin-IX biosynthesis; coproporphyrinogen-III from 5-aminolevulinate: step 2/4. In terms of biological role, tetrapolymerization of the monopyrrole PBG into the hydroxymethylbilane pre-uroporphyrinogen in several discrete steps. This is Porphobilinogen deaminase from Aliivibrio fischeri (strain ATCC 700601 / ES114) (Vibrio fischeri).